The primary structure comprises 1205 residues: Centrosome and spindle pole associated protein 1 (1205 aa).

Coiled-coil stretches lie at residues 12–34 (QKAK…EMKG) and 87–108 (KLKE…TQAK). The tract at residues 16–37 (LAKDKAELESDPPYMEMKGKAS) is disordered. Over residues 158–173 (STEKVRQVEKNIEPKS) the composition is skewed to basic and acidic residues. Disordered stretches follow at residues 158–187 (STEK…KSDL), 222–277 (SRRP…PGVS), and 380–467 (QQKK…GSTL). Positions 176-187 (NKNPISQGKSDL) are enriched in polar residues. 2 stretches are compositionally biased toward basic and acidic residues: residues 222–233 (SRRPLKQTKEEV) and 257–275 (ANGE…RDPG). Residues 357 to 391 (EDRELTKRRKEKYRQELLEQIAEQQKKKRREKDLA) adopt a coiled-coil conformation. 2 stretches are compositionally biased toward basic and acidic residues: residues 401–410 (DPEKSPDRLK) and 417–428 (RHFEEMPPERPR). A Phosphoserine modification is found at serine 405. A compositionally biased stretch (pro residues) spans 433–447 (TPPPPFSAPSSPSVP). The stretch at 574 to 618 (STQSLQSYQEALQEQIREREARRKKERLEKEEYEAKLEAEMRIYN) forms a coiled coil. Residues 677-704 (AENLEDSANKNSGPLQTQSSPFARGNTF) form a disordered region. Residues 685–697 (NKNSGPLQTQSSP) are compositionally biased toward polar residues. Positions 724–813 (RFQIEEKRQR…EKHNLQLQHY (90 aa)) form a coiled coil. Phosphoserine occurs at positions 850 and 869. A disordered region spans residues 862–881 (SSMSRAQSPPVPARKNQLRA). Positions 874–911 (ARKNQLRAEEEKKNVIMELSEMRKQLRSEERRLQGRLL) form a coiled coil. A Phosphoserine modification is found at serine 915. Residues 993–1014 (QQQALLREQQKRLNRIKMRRDA) adopt a coiled-coil conformation. Disordered regions lie at residues 1086 to 1105 (GLDF…SLKS), 1124 to 1169 (RLTE…RPGT), and 1182 to 1205 (NEEQ…AAHA). Residues 1124 to 1134 (RLTEQQKKPTN) show a composition bias toward basic and acidic residues. Residues 1135-1145 (TDDEGSLVDPD) show a composition bias toward acidic residues. Residues 1146–1156 (DIMRHLSDDGR) show a composition bias toward basic and acidic residues.

In terms of assembly, interacts with PLEKHG6. Interacts with ARMC9, TOGARAM1, CCDC66, CEP104 and CEP290. Phosphorylated. Phosphorylation increases in colcemide-treated cells.

It localises to the cytoplasm. The protein resides in the cytoskeleton. The protein localises to the microtubule organizing center. Its subcellular location is the centrosome. It is found in the spindle. It localises to the spindle pole. The protein resides in the cell projection. The protein localises to the cilium. Its function is as follows. May play a role in cell-cycle-dependent microtubule organization. This is Centrosome and spindle pole associated protein 1 (Cspp1) from Mus musculus (Mouse).